The chain runs to 88 residues: CLAVATA3/ESR (CLE)-related protein 42 (88 aa).

A signal peptide spans 1–24; the sequence is MRSPHITISLVFLFFLFLIIQTHQ. Residues 69–88 are disordered; that stretch reads KMIGANEHGVPSGPNPISNR. 2 positions are modified to hydroxyproline: Pro-79 and Pro-82. Pro-82 carries an O-linked (Ara...) hydroxyproline glycan.

This sequence belongs to the CLV3/ESR signal peptide family. The O-glycosylation (arabinosylation) of the hydroxyproline Pro-82 enhances binding affinity of the CLE42p peptide for its receptor. Expressed at low levels in seedlings, roots and inflorescence.

It localises to the secreted. The protein resides in the extracellular space. Functionally, extracellular signal peptide that regulates cell fate. Represses tracheary element differentiation but promotes the formation of procambial cells. This Arabidopsis thaliana (Mouse-ear cress) protein is CLAVATA3/ESR (CLE)-related protein 42.